An 84-amino-acid chain; its full sequence is Putative membrane protein insertion efficiency factor (84 aa).

It belongs to the UPF0161 family.

It localises to the cell inner membrane. Could be involved in insertion of integral membrane proteins into the membrane. In Acidiphilium cryptum (strain JF-5), this protein is Putative membrane protein insertion efficiency factor.